The chain runs to 114 residues: Large ribosomal subunit protein bL19 (114 aa).

Belongs to the bacterial ribosomal protein bL19 family.

In terms of biological role, this protein is located at the 30S-50S ribosomal subunit interface and may play a role in the structure and function of the aminoacyl-tRNA binding site. The protein is Large ribosomal subunit protein bL19 of Bacillus cytotoxicus (strain DSM 22905 / CIP 110041 / 391-98 / NVH 391-98).